Reading from the N-terminus, the 188-residue chain is Elongation factor P (188 aa).

This sequence belongs to the elongation factor P family.

The protein resides in the cytoplasm. Its pathway is protein biosynthesis; polypeptide chain elongation. Functionally, involved in peptide bond synthesis. Stimulates efficient translation and peptide-bond synthesis on native or reconstituted 70S ribosomes in vitro. Probably functions indirectly by altering the affinity of the ribosome for aminoacyl-tRNA, thus increasing their reactivity as acceptors for peptidyl transferase. The protein is Elongation factor P of Anaplasma marginale (strain Florida).